A 370-amino-acid chain; its full sequence is StAR-related lipid transfer protein 7, mitochondrial (370 aa).

The transit peptide at 1-58 (MLPRRLLAAWLAGTRGGGLLALLANQCRFVTGLRVRRAQQIAQLYGRLYSESSRRVLL) directs the protein to the mitochondrion. Residues 86 to 111 (DEERIQEEELQRSINEMKRLEEMSNM) adopt a coiled-coil conformation. Disordered stretches follow at residues 111-138 (MFQS…EGKE) and 343-370 (MSSE…IEYA). The START domain maps to 112–327 (FQSSGVQHHP…LHMATLKAKN (216 aa)).

Proteolytically cleaved by PARL. In terms of tissue distribution, expressed in nasal epithelial cells. Down-regulated in nasal epithelial cells in patients experiencing an asthma exacerbation as compared to stable asthmatics and healthy controls.

The protein resides in the mitochondrion. Its function is as follows. May play a protective role in mucosal tissues by preventing exaggerated allergic responses. This Homo sapiens (Human) protein is StAR-related lipid transfer protein 7, mitochondrial (STARD7).